A 393-amino-acid chain; its full sequence is NAD(P)H-quinone oxidoreductase subunit H, chloroplastic (393 aa).

It belongs to the complex I 49 kDa subunit family. In terms of assembly, NDH is composed of at least 16 different subunits, 5 of which are encoded in the nucleus.

The protein localises to the plastid. It is found in the chloroplast thylakoid membrane. The enzyme catalyses a plastoquinone + NADH + (n+1) H(+)(in) = a plastoquinol + NAD(+) + n H(+)(out). It carries out the reaction a plastoquinone + NADPH + (n+1) H(+)(in) = a plastoquinol + NADP(+) + n H(+)(out). NDH shuttles electrons from NAD(P)H:plastoquinone, via FMN and iron-sulfur (Fe-S) centers, to quinones in the photosynthetic chain and possibly in a chloroplast respiratory chain. The immediate electron acceptor for the enzyme in this species is believed to be plastoquinone. Couples the redox reaction to proton translocation, and thus conserves the redox energy in a proton gradient. The polypeptide is NAD(P)H-quinone oxidoreductase subunit H, chloroplastic (Solanum bulbocastanum (Wild potato)).